The primary structure comprises 547 residues: Phosphatidylinositol/phosphatidylcholine transfer protein SFH7 (547 aa).

Residues 130-304 (EIDQVLKHYP…FFGGLCTCAD (175 aa)) form the CRAL-TRIO domain. Positions 464–526 (SSEYVIMVKR…KKALDETMVN (63 aa)) form a coiled coil.

The protein belongs to the SFH family.

The protein localises to the golgi apparatus membrane. The protein resides in the cell membrane. Required for transport of secretory proteins from the Golgi complex. Catalyzes the transfer of phosphatidylinositol and phosphatidylcholine between membranes in vitro. In Arabidopsis thaliana (Mouse-ear cress), this protein is Phosphatidylinositol/phosphatidylcholine transfer protein SFH7 (SFH7).